The sequence spans 90 residues: MARTVFCEYLKKEAEGLDFQLYPGELGKRIFDSVSKQAWSEWIKKQTMLVNEKKLNMMNAEHRKLLEQEMVNFLFEGKDVHIEGYVPPSN.

Belongs to the Fe(2+)-trafficking protein family.

Functionally, could be a mediator in iron transactions between iron acquisition and iron-requiring processes, such as synthesis and/or repair of Fe-S clusters in biosynthetic enzymes. In Haemophilus influenzae (strain PittEE), this protein is Probable Fe(2+)-trafficking protein.